The following is a 294-amino-acid chain: Formamidopyrimidine-DNA glycosylase (294 aa).

The Schiff-base intermediate with DNA role is filled by Pro2. Glu3 functions as the Proton donor in the catalytic mechanism. Catalysis depends on Lys58, which acts as the Proton donor; for beta-elimination activity. Residues His105, Arg124, and Lys167 each contribute to the DNA site. An FPG-type zinc finger spans residues 258–294; that stretch reads QVYDREGEPCRTRGCKGTVKRFTQNGRSTFWCPSCQK. Arg284 serves as the catalytic Proton donor; for delta-elimination activity.

This sequence belongs to the FPG family. In terms of assembly, monomer. Zn(2+) serves as cofactor.

The catalysed reaction is Hydrolysis of DNA containing ring-opened 7-methylguanine residues, releasing 2,6-diamino-4-hydroxy-5-(N-methyl)formamidopyrimidine.. The enzyme catalyses 2'-deoxyribonucleotide-(2'-deoxyribose 5'-phosphate)-2'-deoxyribonucleotide-DNA = a 3'-end 2'-deoxyribonucleotide-(2,3-dehydro-2,3-deoxyribose 5'-phosphate)-DNA + a 5'-end 5'-phospho-2'-deoxyribonucleoside-DNA + H(+). Functionally, involved in base excision repair of DNA damaged by oxidation or by mutagenic agents. Acts as a DNA glycosylase that recognizes and removes damaged bases. Has a preference for oxidized purines, such as 7,8-dihydro-8-oxoguanine (8-oxoG). Has AP (apurinic/apyrimidinic) lyase activity and introduces nicks in the DNA strand. Cleaves the DNA backbone by beta-delta elimination to generate a single-strand break at the site of the removed base with both 3'- and 5'-phosphates. The polypeptide is Formamidopyrimidine-DNA glycosylase (Afipia carboxidovorans (strain ATCC 49405 / DSM 1227 / KCTC 32145 / OM5) (Oligotropha carboxidovorans)).